Here is a 300-residue protein sequence, read N- to C-terminus: NAD kinase (300 aa).

The active-site Proton acceptor is the aspartate 78. Residues 78–79, 152–153, histidine 163, arginine 180, aspartate 182, and 193–198 each bind NAD(+); these read DG, ND, and TAYALS.

The protein belongs to the NAD kinase family. It depends on a divalent metal cation as a cofactor.

Its subcellular location is the cytoplasm. The catalysed reaction is NAD(+) + ATP = ADP + NADP(+) + H(+). Involved in the regulation of the intracellular balance of NAD and NADP, and is a key enzyme in the biosynthesis of NADP. Catalyzes specifically the phosphorylation on 2'-hydroxyl of the adenosine moiety of NAD to yield NADP. The chain is NAD kinase from Alcanivorax borkumensis (strain ATCC 700651 / DSM 11573 / NCIMB 13689 / SK2).